The primary structure comprises 241 residues: Phycocyanobilin:ferredoxin oxidoreductase (241 aa).

The protein belongs to the HY2 family.

The enzyme catalyses (2R,3Z)-phycocyanobilin + 4 oxidized [2Fe-2S]-[ferredoxin] = biliverdin IXalpha + 4 reduced [2Fe-2S]-[ferredoxin] + 4 H(+). Its function is as follows. Catalyzes the four-electron reduction of biliverdin IX-alpha (2-electron reduction at both the A and D rings); the reaction proceeds via an isolatable 2-electron intermediate, 181,182-dihydrobiliverdin. The polypeptide is Phycocyanobilin:ferredoxin oxidoreductase (Prochlorococcus marinus (strain MIT 9215)).